The sequence spans 97 residues: Large ribosomal subunit protein uL23 (97 aa).

The protein belongs to the universal ribosomal protein uL23 family. In terms of assembly, part of the 50S ribosomal subunit. Contacts protein L29, and trigger factor when it is bound to the ribosome.

One of the early assembly proteins it binds 23S rRNA. One of the proteins that surrounds the polypeptide exit tunnel on the outside of the ribosome. Forms the main docking site for trigger factor binding to the ribosome. The protein is Large ribosomal subunit protein uL23 of Myxococcus xanthus (strain DK1622).